The primary structure comprises 294 residues: 33 kDa chaperonin (294 aa).

Disulfide bonds link C238/C240 and C271/C274.

Belongs to the HSP33 family. Under oxidizing conditions two disulfide bonds are formed involving the reactive cysteines. Under reducing conditions zinc is bound to the reactive cysteines and the protein is inactive.

Its subcellular location is the cytoplasm. In terms of biological role, redox regulated molecular chaperone. Protects both thermally unfolding and oxidatively damaged proteins from irreversible aggregation. Plays an important role in the bacterial defense system toward oxidative stress. This Staphylococcus carnosus (strain TM300) protein is 33 kDa chaperonin.